A 743-amino-acid polypeptide reads, in one-letter code: MPDPSTYRPATGTIPVDPGVYKFRDPHGRVIYVGKAKSLRSRLNSYFADVSTLHPRTRQMVTTAGSVEWTVVSTEVEALQLEYNWIKEFDPRFNVRYRDDKTYPVLAVTLNEEYPRLFVYRGPRRKGVRYFGPYSHAWAIRETLDLLLRVFPARTCSAGVFKRHNQIGRPCLLGYIDKCSAPCVGRVSAAEHRKIVEDFCDFLSGRTDKLVRQLEARMQQASEELDFETAARLRDDVGALRRALEKQAVVLGDGTDADVAAFATDELEAAVQVFHVRGGRVRGQRGWVVEKAGDVIDWAAVDSAAGSDLPLLVEQFLTQFYGEQAALSGAADQEAGSSGVPREVLVPVLPPDAEQVQEWLSGLRGSAVRLRVPQRGDKKALAETVQRNAMEALQQHKLRRAGDFTSRSAALQGIQEALDLDSAPLRIECVDISHVQGTDVVASLVVFEDGLPRKSDYRHYAIKEAAGDGRSDDVASIAEVTRRRFLRHNRDVGVLRAEAAGADGDQASDTDGDQVSDTDGDQVSGGDGGDLAPEAAIDPQTGRPRRFAYPPNLYVVDGGAPQVAAASAVLDELGITDVAVIGLAKRLEEVWVPGEEDPVILPRTSESLYLLQRVRDEAHRFAITFHRSKRSRRMTASALDSVRGLGETRRKALVTHFGSVAKLKQASVEEITAVPGIGTATAKAVLTALGAEEPSADVAGVGDDEPDRTGPVTAERNGADLPREPVGQHGPAAQSASQRTGVE.

The GIY-YIG domain occupies 16-95 (VDPGVYKFRD…IKEFDPRFNV (80 aa)). One can recognise a UVR domain in the interval 208-243 (DKLVRQLEARMQQASEELDFETAARLRDDVGALRRA). 2 disordered regions span residues 497-543 (AEAA…QTGR) and 694-743 (PSAD…TGVE). A compositionally biased stretch (acidic residues) spans 506–520 (QASDTDGDQVSDTDG). Residues 734–743 (QSASQRTGVE) are compositionally biased toward polar residues.

It belongs to the UvrC family. In terms of assembly, interacts with UvrB in an incision complex.

It localises to the cytoplasm. The UvrABC repair system catalyzes the recognition and processing of DNA lesions. UvrC both incises the 5' and 3' sides of the lesion. The N-terminal half is responsible for the 3' incision and the C-terminal half is responsible for the 5' incision. This chain is UvrABC system protein C, found in Rhodococcus opacus (strain B4).